The following is a 398-amino-acid chain: S-adenosylmethionine synthase (398 aa).

An ATP-binding site is contributed by histidine 17. Aspartate 19 contributes to the Mg(2+) binding site. Glutamate 45 is a binding site for K(+). L-methionine is bound by residues glutamate 58 and glutamine 101. The tract at residues 101-111 (QSPDIAQGVDT) is flexible loop. ATP contacts are provided by residues 176–178 (DGK), 243–244 (RF), aspartate 252, 258–259 (RK), and lysine 279. Aspartate 252 is a binding site for L-methionine. Lysine 283 is a binding site for L-methionine.

Belongs to the AdoMet synthase family. As to quaternary structure, homotetramer; dimer of dimers. Mg(2+) is required as a cofactor. The cofactor is K(+).

The protein localises to the cytoplasm. The catalysed reaction is L-methionine + ATP + H2O = S-adenosyl-L-methionine + phosphate + diphosphate. It participates in amino-acid biosynthesis; S-adenosyl-L-methionine biosynthesis; S-adenosyl-L-methionine from L-methionine: step 1/1. In terms of biological role, catalyzes the formation of S-adenosylmethionine (AdoMet) from methionine and ATP. The overall synthetic reaction is composed of two sequential steps, AdoMet formation and the subsequent tripolyphosphate hydrolysis which occurs prior to release of AdoMet from the enzyme. This chain is S-adenosylmethionine synthase, found in Staphylococcus saprophyticus subsp. saprophyticus (strain ATCC 15305 / DSM 20229 / NCIMB 8711 / NCTC 7292 / S-41).